Reading from the N-terminus, the 188-residue chain is Elongation factor P (188 aa).

It belongs to the elongation factor P family.

It localises to the cytoplasm. It functions in the pathway protein biosynthesis; polypeptide chain elongation. Its function is as follows. Involved in peptide bond synthesis. Stimulates efficient translation and peptide-bond synthesis on native or reconstituted 70S ribosomes in vitro. Probably functions indirectly by altering the affinity of the ribosome for aminoacyl-tRNA, thus increasing their reactivity as acceptors for peptidyl transferase. This is Elongation factor P from Aeromonas hydrophila subsp. hydrophila (strain ATCC 7966 / DSM 30187 / BCRC 13018 / CCUG 14551 / JCM 1027 / KCTC 2358 / NCIMB 9240 / NCTC 8049).